The primary structure comprises 266 residues: UPF0354 protein Lm4b_01619 (266 aa).

This sequence belongs to the UPF0354 family.

The sequence is that of UPF0354 protein Lm4b_01619 from Listeria monocytogenes serotype 4b (strain CLIP80459).